The following is a 288-amino-acid chain: 33 kDa chaperonin (288 aa).

2 disulfides stabilise this stretch: Cys235/Cys237 and Cys268/Cys271.

This sequence belongs to the HSP33 family. Under oxidizing conditions two disulfide bonds are formed involving the reactive cysteines. Under reducing conditions zinc is bound to the reactive cysteines and the protein is inactive.

The protein resides in the cytoplasm. In terms of biological role, redox regulated molecular chaperone. Protects both thermally unfolding and oxidatively damaged proteins from irreversible aggregation. Plays an important role in the bacterial defense system toward oxidative stress. This chain is 33 kDa chaperonin, found in Streptococcus suis (strain 98HAH33).